Reading from the N-terminus, the 460-residue chain is Argininosuccinate lyase (460 aa).

Belongs to the lyase 1 family. Argininosuccinate lyase subfamily.

It is found in the cytoplasm. The enzyme catalyses 2-(N(omega)-L-arginino)succinate = fumarate + L-arginine. Its pathway is amino-acid biosynthesis; L-arginine biosynthesis; L-arginine from L-ornithine and carbamoyl phosphate: step 3/3. This is Argininosuccinate lyase from Alkaliphilus metalliredigens (strain QYMF).